The chain runs to 302 residues: Quinolinate synthase (302 aa).

Iminosuccinate is bound by residues His24 and Ser41. A [4Fe-4S] cluster-binding site is contributed by Cys86. Iminosuccinate-binding positions include Tyr112–Asn114 and Ser129. Cys173 contacts [4Fe-4S] cluster. Residues His199–Glu201 and Thr216 contribute to the iminosuccinate site. Cys259 is a [4Fe-4S] cluster binding site.

The protein belongs to the quinolinate synthase family. Type 2 subfamily. [4Fe-4S] cluster is required as a cofactor.

Its subcellular location is the cytoplasm. The enzyme catalyses iminosuccinate + dihydroxyacetone phosphate = quinolinate + phosphate + 2 H2O + H(+). It functions in the pathway cofactor biosynthesis; NAD(+) biosynthesis; quinolinate from iminoaspartate: step 1/1. Functionally, catalyzes the condensation of iminoaspartate with dihydroxyacetone phosphate to form quinolinate. The sequence is that of Quinolinate synthase from Thermococcus onnurineus (strain NA1).